The sequence spans 223 residues: Thiamine-phosphate synthase (223 aa).

Residues Q45–K49 and N77 contribute to the 4-amino-2-methyl-5-(diphosphooxymethyl)pyrimidine site. Residues D78 and D97 each contribute to the Mg(2+) site. T116 is a binding site for 4-amino-2-methyl-5-(diphosphooxymethyl)pyrimidine. 2-[(2R,5Z)-2-carboxy-4-methylthiazol-5(2H)-ylidene]ethyl phosphate is bound at residue S142–T144. Residue K145 coordinates 4-amino-2-methyl-5-(diphosphooxymethyl)pyrimidine. 2-[(2R,5Z)-2-carboxy-4-methylthiazol-5(2H)-ylidene]ethyl phosphate contacts are provided by residues G173 and V193–T194.

Belongs to the thiamine-phosphate synthase family. The cofactor is Mg(2+).

It catalyses the reaction 2-[(2R,5Z)-2-carboxy-4-methylthiazol-5(2H)-ylidene]ethyl phosphate + 4-amino-2-methyl-5-(diphosphooxymethyl)pyrimidine + 2 H(+) = thiamine phosphate + CO2 + diphosphate. It carries out the reaction 2-(2-carboxy-4-methylthiazol-5-yl)ethyl phosphate + 4-amino-2-methyl-5-(diphosphooxymethyl)pyrimidine + 2 H(+) = thiamine phosphate + CO2 + diphosphate. The catalysed reaction is 4-methyl-5-(2-phosphooxyethyl)-thiazole + 4-amino-2-methyl-5-(diphosphooxymethyl)pyrimidine + H(+) = thiamine phosphate + diphosphate. The protein operates within cofactor biosynthesis; thiamine diphosphate biosynthesis; thiamine phosphate from 4-amino-2-methyl-5-diphosphomethylpyrimidine and 4-methyl-5-(2-phosphoethyl)-thiazole: step 1/1. Its function is as follows. Condenses 4-methyl-5-(beta-hydroxyethyl)thiazole monophosphate (THZ-P) and 2-methyl-4-amino-5-hydroxymethyl pyrimidine pyrophosphate (HMP-PP) to form thiamine monophosphate (TMP). The chain is Thiamine-phosphate synthase from Dictyoglomus turgidum (strain DSM 6724 / Z-1310).